The following is a 356-amino-acid chain: Cell division protein ZipA (356 aa).

Residues 1–6 (MEDLQL) are Periplasmic-facing. The helical transmembrane segment at 7–27 (VLFVLGAIAIVAVLVHGFWSI) threads the bilayer. Residues 28–356 (RRQQPKSLKD…DYLHRIRANA (329 aa)) lie on the Cytoplasmic side of the membrane. A disordered region spans residues 132-155 (PAQPDFSLQPPVAKEQHRGPKVSR).

This sequence belongs to the ZipA family. In terms of assembly, interacts with FtsZ via their C-terminal domains.

Its subcellular location is the cell inner membrane. Functionally, essential cell division protein that stabilizes the FtsZ protofilaments by cross-linking them and that serves as a cytoplasmic membrane anchor for the Z ring. Also required for the recruitment to the septal ring of downstream cell division proteins. This is Cell division protein ZipA from Shewanella baltica (strain OS185).